Here is a 774-residue protein sequence, read N- to C-terminus: Lysyl oxidase homolog 2 (774 aa).

The N-terminal stretch at 1-25 (MERRGSSCLCRCLALLALLPTLSLA) is a signal peptide. 4 SRCR domains span residues 58-159 (LRLA…VVCS), 188-302 (IRAI…VSCV), 326-425 (VRLR…VRCN), and 435-544 (LRLN…VACS). 9 disulfide bridges follow: Cys84-Cys148, Cys97-Cys158, Cys128-Cys138, Cys218-Cys291, Cys231-Cys301, Cys265-Cys275, Cys351-Cys414, Cys364-Cys424, and Cys395-Cys405. Asn288 carries an N-linked (GlcNAc...) asparagine glycan. N-linked (GlcNAc...) asparagine glycosylation occurs at Asn455. Disulfide bonds link Cys464/Cys530, Cys477/Cys543, and Cys511/Cys521. The interval 548-751 (PDLVLNAEIV…WMYNCHIGGS (204 aa)) is lysyl-oxidase like. Ca(2+) contacts are provided by Asp549 and Leu550. Disulfide bonds link Cys573–Cys625, Cys579–Cys695, Cys657–Cys673, and Cys663–Cys685. Cu cation is bound by residues His626, His628, and His630. N-linked (GlcNAc...) asparagine glycosylation is present at Asn644. The lysine tyrosylquinone (Lys-Tyr) cross-link spans 653-689 (KASFCLEDTECEGDIQKSYECANFGEQGITMGCWDMY). Tyr689 bears the 2',4',5'-topaquinone mark. The Ca(2+) site is built by Glu722, Asp724, Asn727, and Asn728. The cysteines at positions 732 and 746 are disulfide-linked.

This sequence belongs to the lysyl oxidase family. In terms of assembly, component of some chromatin repressor complex. Interacts with SNAI1. Interacts with TAF10. Interacts with HSPA5. Interacts with EFEMP2. Cu cation is required as a cofactor. Lysine tyrosylquinone residue serves as cofactor. Post-translationally, the lysine tyrosylquinone cross-link (LTQ) is generated by condensation of the epsilon-amino group of a lysine with a topaquinone produced by oxidation of tyrosine. In terms of processing, N-glycosylated. N-glycosylation on Asn-455 and Asn-644 may be essential for proper folding and secretion; may be composed of a fucosylated carbohydrates attached to a trimannose N-linked glycan core.

The protein localises to the secreted. The protein resides in the extracellular space. It localises to the extracellular matrix. Its subcellular location is the basement membrane. It is found in the nucleus. The protein localises to the chromosome. The protein resides in the endoplasmic reticulum. The enzyme catalyses L-lysyl-[protein] + O2 + H2O = (S)-2-amino-6-oxohexanoyl-[protein] + H2O2 + NH4(+). With respect to regulation, specifically inhibited by a mouse monoclonal antibody AB0023, inhibition occurs in a non-competitive manner. Functionally, mediates the post-translational oxidative deamination of lysine residues on target proteins leading to the formation of deaminated lysine (allysine). Acts as a transcription corepressor and specifically mediates deamination of trimethylated 'Lys-4' of histone H3 (H3K4me3), a specific tag for epigenetic transcriptional activation. Shows no activity against histone H3 when it is trimethylated on 'Lys-9' (H3K9me3) or 'Lys-27' (H3K27me3) or when 'Lys-4' is monomethylated (H3K4me1) or dimethylated (H3K4me2). Also mediates deamination of methylated TAF10, a member of the transcription factor IID (TFIID) complex, which induces release of TAF10 from promoters, leading to inhibition of TFIID-dependent transcription. LOXL2-mediated deamination of TAF10 results in transcriptional repression of genes required for embryonic stem cell pluripotency including POU5F1/OCT4, NANOG, KLF4 and SOX2. Involved in epithelial to mesenchymal transition (EMT) via interaction with SNAI1 and participates in repression of E-cadherin CDH1, probably by mediating deamination of histone H3. During EMT, involved with SNAI1 in negatively regulating pericentromeric heterochromatin transcription. SNAI1 recruits LOXL2 to pericentromeric regions to oxidize histone H3 and repress transcription which leads to release of heterochromatin component CBX5/HP1A, enabling chromatin reorganization and acquisition of mesenchymal traits. Interacts with the endoplasmic reticulum protein HSPA5 which activates the IRE1-XBP1 pathway of the unfolded protein response, leading to expression of several transcription factors involved in EMT and subsequent EMT induction. When secreted into the extracellular matrix, promotes cross-linking of extracellular matrix proteins by mediating oxidative deamination of peptidyl lysine residues in precursors to fibrous collagen and elastin. Acts as a regulator of sprouting angiogenesis, probably via collagen IV scaffolding. Acts as a regulator of chondrocyte differentiation, probably by regulating expression of factors that control chondrocyte differentiation. The protein is Lysyl oxidase homolog 2 (LOXL2) of Bos taurus (Bovine).